A 273-amino-acid chain; its full sequence is Protein BRANCHLESS TRICHOME (273 aa).

Residues 1-12 (MKDMKMQSSPET) are compositionally biased toward polar residues. The interval 1-30 (MKDMKMQSSPETMMTRIPTPDPHSTGVRED) is disordered. The stretch at 69–199 (IKVFMESELG…GERERNRMMK (131 aa)) forms a coiled coil.

In terms of assembly, interacts with STI.

Its function is as follows. Acts as a key regulator of trichome branching. Could participate with STI in the same pathway. Also plays a role in integrating endoreplication levels with cell shape. In Arabidopsis thaliana (Mouse-ear cress), this protein is Protein BRANCHLESS TRICHOME (BLT).